The sequence spans 264 residues: Thymidylate synthase (264 aa).

Residue R21 coordinates dUMP. H51 serves as a coordination point for (6R)-5,10-methylene-5,6,7,8-tetrahydrofolate. 126 to 127 (RR) provides a ligand contact to dUMP. C146 serves as the catalytic Nucleophile. Residues 166–169 (RSAD), N177, and 207–209 (HIY) contribute to the dUMP site. Residue D169 participates in (6R)-5,10-methylene-5,6,7,8-tetrahydrofolate binding. A263 lines the (6R)-5,10-methylene-5,6,7,8-tetrahydrofolate pocket.

This sequence belongs to the thymidylate synthase family. Bacterial-type ThyA subfamily. As to quaternary structure, homodimer.

It is found in the cytoplasm. The enzyme catalyses dUMP + (6R)-5,10-methylene-5,6,7,8-tetrahydrofolate = 7,8-dihydrofolate + dTMP. It functions in the pathway pyrimidine metabolism; dTTP biosynthesis. In terms of biological role, catalyzes the reductive methylation of 2'-deoxyuridine-5'-monophosphate (dUMP) to 2'-deoxythymidine-5'-monophosphate (dTMP) while utilizing 5,10-methylenetetrahydrofolate (mTHF) as the methyl donor and reductant in the reaction, yielding dihydrofolate (DHF) as a by-product. This enzymatic reaction provides an intracellular de novo source of dTMP, an essential precursor for DNA biosynthesis. This chain is Thymidylate synthase, found in Brucella anthropi (strain ATCC 49188 / DSM 6882 / CCUG 24695 / JCM 21032 / LMG 3331 / NBRC 15819 / NCTC 12168 / Alc 37) (Ochrobactrum anthropi).